Here is a 119-residue protein sequence, read N- to C-terminus: Phosphoribosyl-AMP cyclohydrolase (119 aa).

Asp72 provides a ligand contact to Mg(2+). Cys73 serves as a coordination point for Zn(2+). Positions 74 and 76 each coordinate Mg(2+). 2 residues coordinate Zn(2+): Cys89 and Cys96.

Belongs to the PRA-CH family. Homodimer. Requires Mg(2+) as cofactor. It depends on Zn(2+) as a cofactor.

It localises to the cytoplasm. It catalyses the reaction 1-(5-phospho-beta-D-ribosyl)-5'-AMP + H2O = 1-(5-phospho-beta-D-ribosyl)-5-[(5-phospho-beta-D-ribosylamino)methylideneamino]imidazole-4-carboxamide. It functions in the pathway amino-acid biosynthesis; L-histidine biosynthesis; L-histidine from 5-phospho-alpha-D-ribose 1-diphosphate: step 3/9. In terms of biological role, catalyzes the hydrolysis of the adenine ring of phosphoribosyl-AMP. The protein is Phosphoribosyl-AMP cyclohydrolase of Methanocella arvoryzae (strain DSM 22066 / NBRC 105507 / MRE50).